A 179-amino-acid polypeptide reads, in one-letter code: Interleukin-10 (179 aa).

Positions 1 to 19 (MPSSSALLCCLVFLAGVAA) are cleaved as a signal peptide. 2 disulfide bridges follow: Cys31-Cys127 and Cys81-Cys133. The N-linked (GlcNAc...) asparagine glycan is linked to Asn135.

The protein belongs to the IL-10 family. In terms of assembly, homodimer. Interacts with IL10RA and IL10RB.

The protein localises to the secreted. Functionally, major immune regulatory cytokine that acts on many cells of the immune system where it has profound anti-inflammatory functions, limiting excessive tissue disruption caused by inflammation. Mechanistically, IL10 binds to its heterotetrameric receptor comprising IL10RA and IL10RB leading to JAK1 and STAT2-mediated phosphorylation of STAT3. In turn, STAT3 translocates to the nucleus where it drives expression of anti-inflammatory mediators. Targets antigen-presenting cells (APCs) such as macrophages and monocytes and inhibits their release of pro-inflammatory cytokines including granulocyte-macrophage colony-stimulating factor /GM-CSF, granulocyte colony-stimulating factor/G-CSF, IL-1 alpha, IL-1 beta, IL-6, IL-8 and TNF-alpha. Also interferes with antigen presentation by reducing the expression of MHC-class II and co-stimulatory molecules, thereby inhibiting their ability to induce T cell activation. In addition, controls the inflammatory response of macrophages by reprogramming essential metabolic pathways including mTOR signaling. The protein is Interleukin-10 (IL10) of Bubalus carabanensis (Swamp type water buffalo).